Here is a 194-residue protein sequence, read N- to C-terminus: Adenylate kinase isoenzyme 1 (194 aa).

19 to 24 (GSGKGT) is a binding site for ATP. The segment at 39–68 (STGDLLRAEVSSGSERGKKLQAIMEKGELV) is NMP. AMP-binding positions include threonine 40, arginine 45, 66–68 (ELV), 95–98 (GYPR), and glutamine 102. Residues 132–142 (KRGETSGRVDD) form an LID region. Residue arginine 133 coordinates ATP. Residues arginine 139 and arginine 150 each contribute to the AMP site. ATP is bound at residue glycine 178.

It belongs to the adenylate kinase family. AK1 subfamily. Monomer. Requires Mg(2+) as cofactor. Skeletal muscle.

It is found in the cytoplasm. The catalysed reaction is a ribonucleoside 5'-phosphate + ATP = a ribonucleoside 5'-diphosphate + ADP. The enzyme catalyses AMP + ATP = 2 ADP. It carries out the reaction dAMP + ATP = dADP + ADP. It catalyses the reaction dATP + AMP = dADP + ADP. The catalysed reaction is dAMP + dATP = 2 dADP. The enzyme catalyses a 2'-deoxyribonucleoside 5'-diphosphate + ATP = a 2'-deoxyribonucleoside 5'-triphosphate + ADP. It carries out the reaction a ribonucleoside 5'-diphosphate + ATP = a ribonucleoside 5'-triphosphate + ADP. It catalyses the reaction CDP + GTP = CTP + GDP. The catalysed reaction is GDP + ATP = GTP + ADP. The enzyme catalyses UDP + ATP = UTP + ADP. It carries out the reaction GTP + UDP = UTP + GDP. It catalyses the reaction dTDP + GTP = dTTP + GDP. The catalysed reaction is dCDP + GTP = dCTP + GDP. The enzyme catalyses dGDP + ATP = dGTP + ADP. It carries out the reaction dADP + GTP = dATP + GDP. It catalyses the reaction thiamine diphosphate + ADP = thiamine triphosphate + AMP. Functionally, catalyzes the reversible transfer of the terminal phosphate group between ATP and AMP. Also displays broad nucleoside diphosphate kinase activity. Plays an important role in cellular energy homeostasis and in adenine nucleotide metabolism. Also catalyzes at a very low rate the synthesis of thiamine triphosphate (ThTP) from thiamine diphosphate (ThDP) and ADP. This Gallus gallus (Chicken) protein is Adenylate kinase isoenzyme 1.